Consider the following 519-residue polypeptide: Dolichol kinase (519 aa).

Residues 1-47 are Cytoplasmic-facing; it reads MVAIIPHASFTTIKLTQKTEGSQMPTEEICKINMRTRKFDVGGNSRD. A helical transmembrane segment spans residues 48–68; sequence FECFYSNFVQTVILLGTFFYC. Residues 69–88 lie on the Lumenal side of the membrane; that stretch reads VERLQPWSIVTADISYKQIF. A helical membrane pass occupies residues 89–109; sequence VNVFVVCLIMVGLIFTKYWQH. Topologically, residues 110-118 are cytoplasmic; that stretch reads GYKSLPKFD. Residues 119–139 traverse the membrane as a helical segment; that stretch reads TIYSLYLPFMVSLLFDTSSTV. The Lumenal portion of the chain corresponds to 140–151; that stretch reads INTILILSVLNS. A helical membrane pass occupies residues 152–172; it reads YRWRTQLVVIILQLCLIFFNF. Residues 173-181 lie on the Cytoplasmic side of the membrane; sequence EAGDRLKNI. Residues 182-203 traverse the membrane as a helical segment; sequence ISIVINSLLSLILKYIGQLKSL. Over 204–223 the chain is Lumenal; it reads DNIDSNLFSILLTNILYVSE. Residues 224–244 traverse the membrane as a helical segment; it reads AGTVHFRILKGIILALTTIIS. Residues 245–253 are Cytoplasmic-facing; the sequence is INYVLKKVM. Residues 254–274 traverse the membrane as a helical segment; the sequence is HFKPFMLSISFAIGLPLFANT. Residues 275-294 are Lumenal-facing; the sequence is FIHLEDGENPLLWLVKYILE. The helical transmembrane segment at 295 to 315 threads the bilayer; that stretch reads STIRQKILFAWSSILILSIPS. Over 316–326 the chain is Cytoplasmic; the sequence is ILIEKDSLSLN. The helical transmembrane segment at 327–347 threads the bilayer; that stretch reads TSRKLWHFIIFLLIIPSFQMD. At 348-349 the chain is on the lumenal side; that stretch reads SN. A helical membrane pass occupies residues 350–370; it reads FVKIALSGTIPVFLSIEYIRF. Residues 371–394 are Cytoplasmic-facing; that stretch reads QNLPPLGSAIELQLRRFADDRDHS. A helical membrane pass occupies residues 395-415; it reads GPLIISYLYLLFGISTPLLMN. Residues 416-417 lie on the Lumenal side of the membrane; that stretch reads NS. Residues 418–438 form a helical membrane-spanning segment; the sequence is PMGLIGLGIGDSLASIIGKRY. At 439 to 449 the chain is on the cytoplasmic side; sequence GRIRWKGTQKT. Residues 450–470 form a helical membrane-spanning segment; that stretch reads LEGTLAFIVTSFIVCLVLLRF. Over 471–472 the chain is Lumenal; sequence DK. A helical membrane pass occupies residues 473 to 493; the sequence is AAIFNHLTTLQLLTLCTLSGV. Residues 494–519 lie on the Cytoplasmic side of the membrane; the sequence is LEGNSVLNDNILIPAFMMICEKLITL.

The protein belongs to the polyprenol kinase family.

It is found in the endoplasmic reticulum membrane. It catalyses the reaction a di-trans,poly-cis-dolichol + CTP = a di-trans,poly-cis-dolichyl phosphate + CDP + H(+). Its pathway is protein modification; protein glycosylation. Its function is as follows. Catalyzes CTP-mediated phosphorylation of dolichol, the terminal step in de novo dolichyl monophosphate (Dol-P) biosynthesis. Dol-P is a lipid carrier essential for the synthesis of N-linked and O-linked oligosaccharides and for GPI anchors. This Saccharomyces cerevisiae (strain ATCC 204508 / S288c) (Baker's yeast) protein is Dolichol kinase (SEC59).